Reading from the N-terminus, the 224-residue chain is Lipoprotein-releasing system ATP-binding protein LolD (224 aa).

The 219-residue stretch at 6 to 224 (VRLRELRRSF…VVRLHEGVLE (219 aa)) folds into the ABC transporter domain. 42-49 (GPSGSGKS) contributes to the ATP binding site.

Belongs to the ABC transporter superfamily. Lipoprotein translocase (TC 3.A.1.125) family. As to quaternary structure, the complex is composed of two ATP-binding proteins (LolD) and two transmembrane proteins (LolC and LolE).

The protein resides in the cell inner membrane. Its function is as follows. Part of the ABC transporter complex LolCDE involved in the translocation of mature outer membrane-directed lipoproteins, from the inner membrane to the periplasmic chaperone, LolA. Responsible for the formation of the LolA-lipoprotein complex in an ATP-dependent manner. This chain is Lipoprotein-releasing system ATP-binding protein LolD, found in Novosphingobium aromaticivorans (strain ATCC 700278 / DSM 12444 / CCUG 56034 / CIP 105152 / NBRC 16084 / F199).